The sequence spans 286 residues: Simplagrin (286 aa).

Residues 1-20 form the signal peptide; the sequence is MKKFCLIFLLLALTALHVKG. A disordered region spans residues 17 to 179; sequence HVKGSPIPDE…GSSSGGEESA (163 aa). Composition is skewed to acidic residues over residues 24–69 and 103–129; these read PDEE…DGQE and VESG…TGGE. The N-linked (GlcNAc...) asparagine glycan is linked to asparagine 116. Over residues 166–177 the composition is skewed to low complexity; sequence SNRAGSSSGGEE.

Belongs to the aegyptin family. In terms of assembly, monomeric in solution; likely has an elongated non-globular form. Interacts with human and rat collagens (via a RGQOGVMGF peptide, where O is hydroxyproline). Not glycosylated. Salivary gland.

The protein localises to the secreted. In terms of biological role, inhibits host platelet aggregation induced by low concentrations of collagen via blocking the von Willebrand Factor (VWF) interaction with collagen. The sequence is that of Simplagrin from Simulium nigrimanum (Black fly).